A 68-amino-acid polypeptide reads, in one-letter code: Large ribosomal subunit protein uL29 (68 aa).

This sequence belongs to the universal ribosomal protein uL29 family.

This is Large ribosomal subunit protein uL29 from Erythrobacter litoralis (strain HTCC2594).